Consider the following 350-residue polypeptide: Small ribosomal subunit biogenesis GTPase RsgA (350 aa).

The segment covering methionine 1–asparagine 17 has biased composition (polar residues). Residues methionine 1 to glutamate 27 form a disordered region. Residues threonine 104 to phenylalanine 273 form the CP-type G domain. GTP-binding positions include asparagine 160–aspartate 163 and glycine 214–serine 222. Positions 297, 302, 304, and 310 each coordinate Zn(2+).

Belongs to the TRAFAC class YlqF/YawG GTPase family. RsgA subfamily. As to quaternary structure, monomer. Associates with 30S ribosomal subunit, binds 16S rRNA. Requires Zn(2+) as cofactor.

Its subcellular location is the cytoplasm. One of several proteins that assist in the late maturation steps of the functional core of the 30S ribosomal subunit. Helps release RbfA from mature subunits. May play a role in the assembly of ribosomal proteins into the subunit. Circularly permuted GTPase that catalyzes slow GTP hydrolysis, GTPase activity is stimulated by the 30S ribosomal subunit. The chain is Small ribosomal subunit biogenesis GTPase RsgA from Salmonella dublin (strain CT_02021853).